The sequence spans 255 residues: Pyridoxine 5'-phosphate synthase (255 aa).

3-amino-2-oxopropyl phosphate-binding residues include Asn-8 and Arg-19. The Proton acceptor role is filled by His-44. 1-deoxy-D-xylulose 5-phosphate-binding residues include Arg-46 and His-51. Glu-74 (proton acceptor) is an active-site residue. Thr-111 is a binding site for 1-deoxy-D-xylulose 5-phosphate. Catalysis depends on His-202, which acts as the Proton donor. Residues Asp-203 and 225-226 (GH) each bind 3-amino-2-oxopropyl phosphate.

It belongs to the PNP synthase family. Homooctamer; tetramer of dimers.

The protein localises to the cytoplasm. The enzyme catalyses 3-amino-2-oxopropyl phosphate + 1-deoxy-D-xylulose 5-phosphate = pyridoxine 5'-phosphate + phosphate + 2 H2O + H(+). The protein operates within cofactor biosynthesis; pyridoxine 5'-phosphate biosynthesis; pyridoxine 5'-phosphate from D-erythrose 4-phosphate: step 5/5. Its function is as follows. Catalyzes the complicated ring closure reaction between the two acyclic compounds 1-deoxy-D-xylulose-5-phosphate (DXP) and 3-amino-2-oxopropyl phosphate (1-amino-acetone-3-phosphate or AAP) to form pyridoxine 5'-phosphate (PNP) and inorganic phosphate. The polypeptide is Pyridoxine 5'-phosphate synthase (Xanthomonas oryzae pv. oryzae (strain PXO99A)).